Here is a 152-residue protein sequence, read N- to C-terminus: Small ribosomal subunit protein bS6 (152 aa).

Residues 96 to 152 (HEEGPSAMLQKRDRDDRGERGDRGDRGDRGDRGFGGREDRPRRPRPTEESHGGEEEV) form a disordered region.

This sequence belongs to the bacterial ribosomal protein bS6 family.

Functionally, binds together with bS18 to 16S ribosomal RNA. This Xanthobacter autotrophicus (strain ATCC BAA-1158 / Py2) protein is Small ribosomal subunit protein bS6.